Consider the following 303-residue polypeptide: Glycine--tRNA ligase alpha subunit (303 aa).

It belongs to the class-II aminoacyl-tRNA synthetase family. In terms of assembly, tetramer of two alpha and two beta subunits.

The protein resides in the cytoplasm. It carries out the reaction tRNA(Gly) + glycine + ATP = glycyl-tRNA(Gly) + AMP + diphosphate. In Bordetella pertussis (strain Tohama I / ATCC BAA-589 / NCTC 13251), this protein is Glycine--tRNA ligase alpha subunit.